The following is a 242-amino-acid chain: UPF0173 metal-dependent hydrolase Rxyl_1261 (242 aa).

Belongs to the UPF0173 family.

This chain is UPF0173 metal-dependent hydrolase Rxyl_1261, found in Rubrobacter xylanophilus (strain DSM 9941 / JCM 11954 / NBRC 16129 / PRD-1).